Consider the following 88-residue polypeptide: Small ribosomal subunit protein bS20 (88 aa).

Belongs to the bacterial ribosomal protein bS20 family.

Functionally, binds directly to 16S ribosomal RNA. This chain is Small ribosomal subunit protein bS20, found in Maricaulis maris (strain MCS10) (Caulobacter maris).